A 252-amino-acid chain; its full sequence is 2-succinyl-6-hydroxy-2,4-cyclohexadiene-1-carboxylate synthase (252 aa).

This sequence belongs to the AB hydrolase superfamily. MenH family. In terms of assembly, monomer.

The catalysed reaction is 5-enolpyruvoyl-6-hydroxy-2-succinyl-cyclohex-3-ene-1-carboxylate = (1R,6R)-6-hydroxy-2-succinyl-cyclohexa-2,4-diene-1-carboxylate + pyruvate. It functions in the pathway quinol/quinone metabolism; 1,4-dihydroxy-2-naphthoate biosynthesis; 1,4-dihydroxy-2-naphthoate from chorismate: step 3/7. It participates in quinol/quinone metabolism; menaquinone biosynthesis. Catalyzes a proton abstraction reaction that results in 2,5-elimination of pyruvate from 2-succinyl-5-enolpyruvyl-6-hydroxy-3-cyclohexene-1-carboxylate (SEPHCHC) and the formation of 2-succinyl-6-hydroxy-2,4-cyclohexadiene-1-carboxylate (SHCHC). The polypeptide is 2-succinyl-6-hydroxy-2,4-cyclohexadiene-1-carboxylate synthase (Escherichia coli (strain UTI89 / UPEC)).